Here is a 395-residue protein sequence, read N- to C-terminus: MAQREWVEKDFYQELGVSSDASPEEIKRAYRKLARDLHPDANPGNPAAGERFKAVSEAHNVLSDPAKRKEYDETRRLFAGGGFGGRRFDSGFGGGFGGFGVGGDGAEFNLNDLFDAASRTGGTTIGDLFGGLFGRGGSARPSRPRRGNDLETETELDFVEAAKGVAMPLRLTSPAPCTNCHGSGARPGTSPKVCPTCNGSGVINRNQGAFGFSEPCTDCRGSGSIIEHPCEECKGTGVTTRTRTINVRIPPGVEDGQRIRLAGQGEAGLRGAPSGDLYVTVHVRPDKIFGRDGDDLTVTVPVSFTELALGSTLSVPTLDGTVGVRVPKGTADGRILRVRGRGVPKRSGGSGDLLVTVKVAVPPNLAGAAQEALEAYAAAERSSGFNPRAGWAGNR.

The J domain occupies 10–75 (DFYQELGVSS…AKRKEYDETR (66 aa)). The segment at 164–242 (GVAMPLRLTS…CKGTGVTTRT (79 aa)) adopts a CR-type zinc-finger fold. Residues cysteine 177, cysteine 180, cysteine 194, cysteine 197, cysteine 216, cysteine 219, cysteine 230, and cysteine 233 each coordinate Zn(2+). 4 CXXCXGXG motif repeats span residues 177–184 (CTNCHGSG), 194–201 (CPTCNGSG), 216–223 (CTDCRGSG), and 230–237 (CEECKGTG).

Belongs to the DnaJ family. Homodimer. Zn(2+) serves as cofactor.

The protein resides in the cytoplasm. Participates actively in the response to hyperosmotic and heat shock by preventing the aggregation of stress-denatured proteins and by disaggregating proteins, also in an autonomous, DnaK-independent fashion. Unfolded proteins bind initially to DnaJ; upon interaction with the DnaJ-bound protein, DnaK hydrolyzes its bound ATP, resulting in the formation of a stable complex. GrpE releases ADP from DnaK; ATP binding to DnaK triggers the release of the substrate protein, thus completing the reaction cycle. Several rounds of ATP-dependent interactions between DnaJ, DnaK and GrpE are required for fully efficient folding. Also involved, together with DnaK and GrpE, in the DNA replication of plasmids through activation of initiation proteins. The protein is Chaperone protein DnaJ 1 of Mycobacterium bovis (strain ATCC BAA-935 / AF2122/97).